A 252-amino-acid polypeptide reads, in one-letter code: Probable transcriptional regulatory protein Npun_R5651 (252 aa).

Belongs to the TACO1 family.

The protein resides in the cytoplasm. This is Probable transcriptional regulatory protein Npun_R5651 from Nostoc punctiforme (strain ATCC 29133 / PCC 73102).